A 341-amino-acid chain; its full sequence is Dihydroorotate dehydrogenase (quinone) (341 aa).

Residues 62-66 and threonine 86 each bind FMN; that span reads AGMDK. Lysine 66 is a binding site for substrate. A substrate-binding site is contributed by 111–115; it reads NRMGF. Residues asparagine 139 and asparagine 172 each contribute to the FMN site. A substrate-binding site is contributed by asparagine 172. The Nucleophile role is filled by serine 175. Substrate is bound at residue asparagine 177. Residues lysine 217 and threonine 245 each coordinate FMN. 246-247 contributes to the substrate binding site; it reads NT. FMN contacts are provided by residues glycine 268, glycine 297, and 318–319; that span reads YS.

This sequence belongs to the dihydroorotate dehydrogenase family. Type 2 subfamily. In terms of assembly, monomer. The cofactor is FMN.

The protein resides in the cell membrane. It catalyses the reaction (S)-dihydroorotate + a quinone = orotate + a quinol. It participates in pyrimidine metabolism; UMP biosynthesis via de novo pathway; orotate from (S)-dihydroorotate (quinone route): step 1/1. Its function is as follows. Catalyzes the conversion of dihydroorotate to orotate with quinone as electron acceptor. The sequence is that of Dihydroorotate dehydrogenase (quinone) from Shewanella loihica (strain ATCC BAA-1088 / PV-4).